The following is a 209-amino-acid chain: Orotate phosphoribosyltransferase (209 aa).

5-phospho-alpha-D-ribose 1-diphosphate-binding positions include R96, K100, H102, and 122-130 (EDLISTGGS). S126 is an orotate binding site.

It belongs to the purine/pyrimidine phosphoribosyltransferase family. PyrE subfamily. Homodimer. The cofactor is Mg(2+).

The enzyme catalyses orotidine 5'-phosphate + diphosphate = orotate + 5-phospho-alpha-D-ribose 1-diphosphate. The protein operates within pyrimidine metabolism; UMP biosynthesis via de novo pathway; UMP from orotate: step 1/2. Catalyzes the transfer of a ribosyl phosphate group from 5-phosphoribose 1-diphosphate to orotate, leading to the formation of orotidine monophosphate (OMP). This is Orotate phosphoribosyltransferase from Listeria innocua serovar 6a (strain ATCC BAA-680 / CLIP 11262).